Reading from the N-terminus, the 273-residue chain is 4-hydroxy-tetrahydrodipicolinate reductase (273 aa).

NAD(+)-binding positions include 11–16, 102–104, and 126–129; these read GALGRM, GTT, and SPNF. H159 (proton donor/acceptor) is an active-site residue. (S)-2,3,4,5-tetrahydrodipicolinate is bound at residue H160. K163 serves as the catalytic Proton donor. 169-170 provides a ligand contact to (S)-2,3,4,5-tetrahydrodipicolinate; sequence GT.

It belongs to the DapB family. As to quaternary structure, homotetramer.

It localises to the cytoplasm. The enzyme catalyses (S)-2,3,4,5-tetrahydrodipicolinate + NAD(+) + H2O = (2S,4S)-4-hydroxy-2,3,4,5-tetrahydrodipicolinate + NADH + H(+). It carries out the reaction (S)-2,3,4,5-tetrahydrodipicolinate + NADP(+) + H2O = (2S,4S)-4-hydroxy-2,3,4,5-tetrahydrodipicolinate + NADPH + H(+). It participates in amino-acid biosynthesis; L-lysine biosynthesis via DAP pathway; (S)-tetrahydrodipicolinate from L-aspartate: step 4/4. Its function is as follows. Catalyzes the conversion of 4-hydroxy-tetrahydrodipicolinate (HTPA) to tetrahydrodipicolinate. This is 4-hydroxy-tetrahydrodipicolinate reductase from Buchnera aphidicola subsp. Cinara cedri (strain Cc).